Reading from the N-terminus, the 279-residue chain is Oxygen-dependent coproporphyrinogen-III oxidase (279 aa).

Substrate is bound at residue Ser-102. A divalent metal cation-binding residues include His-106 and His-116. The Proton donor role is filled by His-116. A substrate-binding site is contributed by 118-120 (NTR). His-149 and His-179 together coordinate a divalent metal cation. Residues 244–279 (YVEFNLLYDRGTKFGLMTDGNVEAILMSLPPEVKFN) form an important for dimerization region.

This sequence belongs to the aerobic coproporphyrinogen-III oxidase family. Homodimer. It depends on a divalent metal cation as a cofactor.

It localises to the cytoplasm. The catalysed reaction is coproporphyrinogen III + O2 + 2 H(+) = protoporphyrinogen IX + 2 CO2 + 2 H2O. Its pathway is porphyrin-containing compound metabolism; protoporphyrin-IX biosynthesis; protoporphyrinogen-IX from coproporphyrinogen-III (O2 route): step 1/1. Its function is as follows. Involved in the heme biosynthesis. Catalyzes the aerobic oxidative decarboxylation of propionate groups of rings A and B of coproporphyrinogen-III to yield the vinyl groups in protoporphyrinogen-IX. The sequence is that of Oxygen-dependent coproporphyrinogen-III oxidase from Rickettsia africae (strain ESF-5).